The following is an 816-amino-acid chain: Neuroligin-4, Y-linked (816 aa).

The N-terminal stretch at 1–43 is a signal peptide; sequence MLRPQGLLWLPLLFTSVCVMLNSNVLLWITALAIKFTLIDSQA. The Extracellular portion of the chain corresponds to 44–676; sequence QYPVVNTNYG…TKRDYSTELS (633 aa). Asn102 is a glycosylation site (N-linked (GlcNAc...) asparagine). 2 disulfides stabilise this stretch: Cys110-Cys146 and Cys306-Cys317. The segment at 359–364 is interaction with NRXN1; sequence QGEFLN. Cysteines 476 and 510 form a disulfide. Asn511 is a glycosylation site (N-linked (GlcNAc...) asparagine). The segment at 636-659 is disordered; it reads TKRPAITPANNPKHSKDPHKTGPE. The span at 649–658 shows a compositional bias: basic and acidic residues; that stretch reads HSKDPHKTGP. The chain crosses the membrane as a helical span at residues 677–697; sequence VTIAVGASLLFLNILAFAALY. The Cytoplasmic portion of the chain corresponds to 698-816; sequence YKKDKRRHET…LPHGHSTTRV (119 aa). The residue at position 712 (Ser712) is a Phosphoserine.

It belongs to the type-B carboxylesterase/lipase family. As to quaternary structure, homodimer. Interacts with NRXN1 in a calcium-dependent manner. Interaction with neurexins is mediated by heparan sulfate glycan modification on neurexin. Interacts through its C-terminus with DLG4/PSD-95 third PDZ domain. As to expression, expressed in fetal and adult brain, prostate and testis.

Its subcellular location is the cell membrane. It is found in the postsynaptic density membrane. Functionally, cell surface protein involved in cell-cell-interactions via its interactions with neurexin family members. The chain is Neuroligin-4, Y-linked (NLGN4Y) from Homo sapiens (Human).